The following is a 190-amino-acid chain: MTALWIAIAALSALGLLFGLVLGYAARRFEVEEDPVAEQVDEILPQSQCGQCGYPGCRPYAEAVANGEMINKCAPGGEQVMLKLAELLNVEPQPLGSEAAAEPVRQVAYIDEANCIGCTKCIQACPVDAIVGATRAMHTVITDLCTGCDLCVAPCPTDCIEMRPVATTTANWKWDMKTIPVQVIHVEQHA.

Residues 1–26 (MTALWIAIAALSALGLLFGLVLGYAA) are hydrophobic. Residues 32 to 90 (EEDPVAEQVDEILPQSQCGQCGYPGCRPYAEAVANGEMINKCAPGGEQVMLKLAELLNV) form the 4Fe-4S domain. Positions 49, 52, 57, 73, 115, 118, 121, 125, 145, 148, 151, and 155 each coordinate [4Fe-4S] cluster. 2 4Fe-4S ferredoxin-type domains span residues 106–135 (QVAY…GATR) and 136–165 (AMHT…MRPV).

Belongs to the 4Fe4S bacterial-type ferredoxin family. RnfB subfamily. In terms of assembly, the complex is composed of six subunits: RnfA, RnfB, RnfC, RnfD, RnfE and RnfG. It depends on [4Fe-4S] cluster as a cofactor.

The protein localises to the cell inner membrane. Part of a membrane-bound complex that couples electron transfer with translocation of ions across the membrane. In Serratia proteamaculans (strain 568), this protein is Ion-translocating oxidoreductase complex subunit B.